We begin with the raw amino-acid sequence, 582 residues long: BTB/POZ domain and ankyrin repeat-containing protein NPR1 (582 aa).

Positions 1–18 (MEPPTSHVTNAFSDSDSA) are enriched in polar residues. A disordered region spans residues 1 to 25 (MEPPTSHVTNAFSDSDSASVEEGGA). The 86-residue stretch at 55 to 140 (ADARIAVPGG…VLDYLYSGRV (86 aa)) folds into the BTB domain. A C2HC NPR-type zinc finger spans residues 147–161 (ACLCVDEDCAHVGCH). Cys150, Cys155, His157, and Cys160 together coordinate Zn(2+). 4 ANK repeats span residues 229–258 (RSNL…SLGL), 269–299 (KHVR…NLDD), 301–328 (FALH…DVNH), and 332–361 (RGYT…RPAD). Residues 391-526 (PSPKDRLCIE…VLDKIMDDET (136 aa)) form a salicylic acid-binding core (SBC) region. A salicylate-binding site is contributed by Arg436. Residues 551-582 (QKAFHEDKEENDRSGLSSSSSSTSIGAIRPRR) are disordered. Positions 553–563 (AFHEDKEENDR) are enriched in basic and acidic residues. The segment covering 564-574 (SGLSSSSSSTS) has biased composition (low complexity).

Belongs to the plant 'ANKYRIN-BTB/POZ' family. 'NPR1-like' subfamily. As to quaternary structure, oligomer in an uninduced state; disulfide-linked. Forms activated monomer upon changes in cellular redox potential. Interacts with TGA2.1, TGA2.2, TGA2.3, LG2, TGAL1 and TGAL4. Interacts with NRR, RH1, RH2 and RH3.

Its subcellular location is the cytoplasm. The protein localises to the nucleus. It localises to the nuclear body. It participates in protein modification; protein ubiquitination. Functionally, salicylic acid (SA)-binding substrate-specific adapter of an E3 ubiquitin-protein ligase complex (CUL3-RBX1-BTB) which mediates the ubiquitination and subsequent proteasomal degradation of target proteins. Transcription cofactor that represses gene expression in the absence of salicylic acid (SA), when attached to negative cis-elements (W-box) with WRKY transcription factors, but stimulates gene expression upon activation by SA, when sumoylated and attached to positive cis-elements (as-1) with TGA transcription factors, thus confering immunity through a series of gene regulations ending in a significant increase in antimicrobial and defense genes expression. Key positive factor of disease resistance. Plays an essential role in benzothiadiazole (BTH)-induced resistance to the blast fungus disease caused by Magnaporthe oryzae. Involved in defense response against the bacterial blight disease caused by Xanthomonas oryzae pv. oryzae (Xoo). Over-expression of NPR1/NH1 confers disease resistance to Xoo, but also enhances herbivore susceptibility. Functions as a transcriptional coactivator of TGA2.1 and LG2 in vitro. Involved in defense response against herbivore. Plants silencing NPR1/NH1 have increased herbivore-induced trypsin proteinase inhibitors and volatiles, which reduces the performance of the striped stem borer (SSB) Chilo suppressalis. This chain is BTB/POZ domain and ankyrin repeat-containing protein NPR1, found in Oryza sativa subsp. japonica (Rice).